A 932-amino-acid polypeptide reads, in one-letter code: Progesterone receptor (932 aa).

Residues 1–164 (MTELKAKGPR…PATQGVLSPL (164 aa)) are AF3; mediates transcriptional activation. The tract at residues 1–254 (MTELKAKGPR…GGAAAGGAAA (254 aa)) is disordered. Positions 1 to 565 (MTELKAKGPR…YSFESLPQKI (565 aa)) are modulating, Pro-Rich. Phosphoserine is present on S20. Residues 55–59 (LDGLL) carry the LXXL motif 1 motif. S81 bears the Phosphoserine mark. Residues 88-103 (SRAEATRGAGGSSSSP) show a composition bias toward low complexity. The short motif at 115 to 119 (LDTLL) is the LXXL motif 2 element. Phosphoserine occurs at positions 130 and 162. The mediates transcriptional transrepression stretch occupies residues 165 to 304 (MSRSGGKAGD…LATTVMDFIH (140 aa)). The Nuclear localization signal motif lies at 183 to 187 (KVLPQ). Phosphoserine is present on residues S190 and S213. A compositionally biased stretch (acidic residues) spans 220-231 (EVEEEDGSESED). The span at 232–254 (SAGPLLKGKPRALGGAAAGGAAA) shows a compositional bias: low complexity. S293 is modified (phosphoserine; by MAPK1). Residues 334-349 (AASAFAPPRSSPSASS) are compositionally biased toward low complexity. The disordered stretch occupies residues 334-356 (AASAFAPPRSSPSASSTPVAVGD). S344 is subject to Phosphoserine; by MAPK. K387 is covalently cross-linked (Glycyl lysine isopeptide (Lys-Gly) (interchain with G-Cter in SUMO); alternate). Residue K387 forms a Glycyl lysine isopeptide (Lys-Gly) (interchain with G-Cter in ubiquitin); alternate linkage. 2 disordered regions span residues 414 to 451 (PDFP…SSAS) and 468 to 499 (PPQQ…STAA). Over residues 417 to 432 (PLGPPPPLPPRAPPSR) the composition is skewed to pro residues. Residues 433-451 (PGEAAVTAAPASASVSSAS) show a composition bias toward low complexity. The interval 455–545 (STLECILYKA…VYPPYLNYLR (91 aa)) is AF1; mediates transcriptional activation. The segment covering 470 to 480 (QQGPFAPPPSK) has biased composition (pro residues). Residue K530 forms a Glycyl lysine isopeptide (Lys-Gly) (interchain with G-Cter in SUMO) linkage. 2 consecutive NR C4-type zinc fingers follow at residues 566-586 (CLIC…CGSC) and 602-626 (CAGR…LRKC). Residues 566-638 (CLICGDEASG…AGMVLGGRKF (73 aa)) constitute a DNA-binding region (nuclear receptor). S675 carries the post-translational modification Phosphoserine. One can recognise an NR LBD domain in the interval 678 to 912 (QDIQLIPPLI…EFPEMMSEVI (235 aa)). An AF2; mediates transcriptional activation region spans residues 686–932 (LINLLMSIEP…MVKPLLFHKK (247 aa)). R765 serves as a coordination point for progesterone.

Belongs to the nuclear hormone receptor family. Interacts with SMARD1 and UNC45A. Interacts with CUEDC2; the interaction promotes ubiquitination, decreases sumoylation, and represses transcriptional activity. Interacts with PIAS3; the interaction promotes sumoylation of PR in a hormone-dependent manner, inhibits DNA-binding, and alters nuclear export. Interacts with SP1; the interaction requires ligand-induced phosphorylation on Ser-344 by ERK1/2-MAPK. Interacts with PRMT2. Interacts with NCOA2 and NCOA1. Interacts with KLF9. Interacts with GTF2B. In terms of processing, phosphorylated on multiple serine sites. Several of these sites are hormone-dependent. Phosphorylation on Ser-293 is highly hormone-dependent and modulates ubiquitination and sumoylation on Lys-387. Phosphorylation on Ser-102 and Ser-344 also requires induction by hormone. Basal phosphorylation on Ser-81, Ser-162 and Ser-190 is increased in response to progesterone and can be phosphorylated in vitro by the CDK2-A1 complex. Phosphorylation at Ser-162 and Ser-293, but not at Ser-190, is impaired during the G(2)/M phase of the cell cycle. Phosphorylation on Ser-344 by ERK1/2 MAPK is required for interaction with SP1. Sumoylation is hormone-dependent and represses transcriptional activity. Sumoylation on all three sites is enhanced by PIAS3. Desumoylated by SENP1. Sumoylation on Lys-387, the main site of sumoylation, is repressed by ubiquitination on the same site, and modulated by phosphorylation at Ser-293. Post-translationally, ubiquitination is hormone-dependent and represses sumoylation on the same site. Promoted by MAPK-mediated phosphorylation on Ser-293. Ubiquitinated by UBR5, leading to its degradation: UBR5 specifically recognizes and binds ligand-bound PGR when it is not associated with coactivators (NCOAs). In presence of NCOAs, the UBR5-degron is not accessible, preventing its ubiquitination and degradation. In terms of processing, palmitoylated by ZDHHC7 and ZDHHC21. Palmitoylation is required for plasma membrane targeting and for rapid intracellular signaling via ERK and AKT kinases and cAMP generation.

Its subcellular location is the nucleus. The protein localises to the cytoplasm. Its function is as follows. The steroid hormones and their receptors are involved in the regulation of eukaryotic gene expression and affect cellular proliferation and differentiation in target tissues. Transcriptional activator of several progesteron-dependent promoters in a variety of cell types. Involved in activation of SRC-dependent MAPK signaling on hormone stimulation. The polypeptide is Progesterone receptor (PGR) (Hylobates lar (Lar gibbon)).